The following is a 230-amino-acid chain: Large ribosomal subunit protein uL1 (230 aa).

This sequence belongs to the universal ribosomal protein uL1 family. As to quaternary structure, part of the 50S ribosomal subunit.

Binds directly to 23S rRNA. The L1 stalk is quite mobile in the ribosome, and is involved in E site tRNA release. In terms of biological role, protein L1 is also a translational repressor protein, it controls the translation of the L11 operon by binding to its mRNA. The polypeptide is Large ribosomal subunit protein uL1 (Bifidobacterium adolescentis (strain ATCC 15703 / DSM 20083 / NCTC 11814 / E194a)).